Here is a 180-residue protein sequence, read N- to C-terminus: ATP synthase subunit b (180 aa).

The helical transmembrane segment at 26–46 (IPLMLATLAALVISIFFLTYF) threads the bilayer.

Belongs to the ATPase B chain family. In terms of assembly, F-type ATPases have 2 components, F(1) - the catalytic core - and F(0) - the membrane proton channel. F(1) has five subunits: alpha(3), beta(3), gamma(1), delta(1), epsilon(1). F(0) has three main subunits: a(1), b(2) and c(10-14). The alpha and beta chains form an alternating ring which encloses part of the gamma chain. F(1) is attached to F(0) by a central stalk formed by the gamma and epsilon chains, while a peripheral stalk is formed by the delta and b chains.

Its subcellular location is the cell membrane. In terms of biological role, f(1)F(0) ATP synthase produces ATP from ADP in the presence of a proton or sodium gradient. F-type ATPases consist of two structural domains, F(1) containing the extramembraneous catalytic core and F(0) containing the membrane proton channel, linked together by a central stalk and a peripheral stalk. During catalysis, ATP synthesis in the catalytic domain of F(1) is coupled via a rotary mechanism of the central stalk subunits to proton translocation. Its function is as follows. Component of the F(0) channel, it forms part of the peripheral stalk, linking F(1) to F(0). This is ATP synthase subunit b from Mycoplasmopsis pulmonis (strain UAB CTIP) (Mycoplasma pulmonis).